The primary structure comprises 472 residues: Glutamate--tRNA ligase 2 (472 aa).

Residues 10–20 (PSPTGYLHIGG) carry the 'HIGH' region motif. Positions 99, 101, 126, and 128 each coordinate Zn(2+). Basic and acidic residues predominate over residues 112 to 130 (EQQARKEKPRYDGRCRDLD). A disordered region spans residues 112-137 (EQQARKEKPRYDGRCRDLDGPPSEEV). Residues 240–244 (RLSKR) carry the 'KMSKS' region motif. Lys-243 contacts ATP.

This sequence belongs to the class-I aminoacyl-tRNA synthetase family. Glutamate--tRNA ligase type 1 subfamily. In terms of assembly, monomer. Zn(2+) is required as a cofactor.

It is found in the cytoplasm. It catalyses the reaction tRNA(Glu) + L-glutamate + ATP = L-glutamyl-tRNA(Glu) + AMP + diphosphate. Its function is as follows. Catalyzes the attachment of glutamate to tRNA(Glu) in a two-step reaction: glutamate is first activated by ATP to form Glu-AMP and then transferred to the acceptor end of tRNA(Glu). The polypeptide is Glutamate--tRNA ligase 2 (Halorhodospira halophila (strain DSM 244 / SL1) (Ectothiorhodospira halophila (strain DSM 244 / SL1))).